Reading from the N-terminus, the 326-residue chain is Metallophosphoesterase domain-containing protein 1 (326 aa).

The protein belongs to the UPF0046 family. As to expression, expressed predominantly in adult brain.

May have metallophosphoesterase activity (in vitro). This is Metallophosphoesterase domain-containing protein 1 (MPPED1) from Homo sapiens (Human).